Consider the following 57-residue polypeptide: Aspartyl-phosphate phosphatase YnzD (57 aa).

It belongs to the spo0E family.

Functionally, aspartyl-phosphate phosphatase which specifically dephosphorylates the sporulation transcription factor Spo0A-P and negatively regulates the sporulation initiation pathway in order to control the proper timing of sporulation. This is Aspartyl-phosphate phosphatase YnzD (ynzD) from Bacillus subtilis (strain 168).